Reading from the N-terminus, the 387-residue chain is Galactokinase (387 aa).

33 to 36 contributes to the substrate binding site; the sequence is EHID. ATP-binding positions include serine 67 and 124 to 130; that span reads GAGLSSS. The Mg(2+) site is built by serine 130 and glutamate 162. Catalysis depends on aspartate 174, which acts as the Proton acceptor. Tyrosine 224 provides a ligand contact to substrate.

It belongs to the GHMP kinase family. GalK subfamily.

The protein localises to the cytoplasm. The enzyme catalyses alpha-D-galactose + ATP = alpha-D-galactose 1-phosphate + ADP + H(+). It functions in the pathway carbohydrate metabolism; galactose metabolism. In terms of biological role, catalyzes the transfer of the gamma-phosphate of ATP to D-galactose to form alpha-D-galactose-1-phosphate (Gal-1-P). This chain is Galactokinase, found in Clostridium perfringens (strain ATCC 13124 / DSM 756 / JCM 1290 / NCIMB 6125 / NCTC 8237 / Type A).